We begin with the raw amino-acid sequence, 559 residues long: Cytochrome P450 86B1 (559 aa).

A helical transmembrane segment spans residues 31–51 (FLLRDVQILELLIAIFVFVAI). Cys-488 contributes to the heme binding site.

The protein belongs to the cytochrome P450 family. Heme serves as cofactor. Expressed in roots endodermis, anthers, stigmas, stomata of young pedicels of inflorescences, the placenta region of siliques, at the level of the hilum in matures seeds, at the junction of siliques to pedicels where abscission of floral parts takes place and in nectary glands.

The protein resides in the endoplasmic reticulum membrane. Involved in very long chain fatty acids (VLCFA) omega-hydroxylation. Required for the synthesis of saturated VLCFA alpha, omega-bifunctional suberin monomers. The polypeptide is Cytochrome P450 86B1 (CYP86B1) (Arabidopsis thaliana (Mouse-ear cress)).